We begin with the raw amino-acid sequence, 808 residues long: Leucine--tRNA ligase (808 aa).

The 'HIGH' region signature appears at 40–51; sequence PYPSGQGLHVGH. Positions 580–584 match the 'KMSKS' region motif; sequence KMSKS. ATP is bound at residue lysine 583.

The protein belongs to the class-I aminoacyl-tRNA synthetase family.

It is found in the cytoplasm. It catalyses the reaction tRNA(Leu) + L-leucine + ATP = L-leucyl-tRNA(Leu) + AMP + diphosphate. This Leuconostoc mesenteroides subsp. mesenteroides (strain ATCC 8293 / DSM 20343 / BCRC 11652 / CCM 1803 / JCM 6124 / NCDO 523 / NBRC 100496 / NCIMB 8023 / NCTC 12954 / NRRL B-1118 / 37Y) protein is Leucine--tRNA ligase.